Reading from the N-terminus, the 317-residue chain is tRNA dimethylallyltransferase (317 aa).

An ATP-binding site is contributed by 16-23 (GPTASGKS). 18–23 (TASGKS) contributes to the substrate binding site. Interaction with substrate tRNA regions lie at residues 41–44 (DSAQ), 165–169 (QRIQR), and 247–252 (RCVGYR).

It belongs to the IPP transferase family. In terms of assembly, monomer. It depends on Mg(2+) as a cofactor.

It carries out the reaction adenosine(37) in tRNA + dimethylallyl diphosphate = N(6)-dimethylallyladenosine(37) in tRNA + diphosphate. Its function is as follows. Catalyzes the transfer of a dimethylallyl group onto the adenine at position 37 in tRNAs that read codons beginning with uridine, leading to the formation of N6-(dimethylallyl)adenosine (i(6)A). The sequence is that of tRNA dimethylallyltransferase from Nitrosomonas europaea (strain ATCC 19718 / CIP 103999 / KCTC 2705 / NBRC 14298).